A 37-amino-acid chain; its full sequence is Large ribosomal subunit protein bL36c (37 aa).

Belongs to the bacterial ribosomal protein bL36 family.

It localises to the plastid. The protein resides in the chloroplast. In Tetradesmus obliquus (Green alga), this protein is Large ribosomal subunit protein bL36c.